A 236-amino-acid polypeptide reads, in one-letter code: ADTIVAVELDTYPNTDIGDPNYQHIGINIKSIRSKATTRWNVQDGKVGTAHISYNSVAKRLSAIVSYPGGSSATVSYDVDLNNILPEWVRVGLSASTGVYKETNTILSWSFTSKLKTNSTADAQSLHFTFNQFSQSPKDLILQGDASTDSDGNLQLTRVSNGSPQSNSVGRALYYAPVHVWDKSAVVASFDATFTFLIKSPDSDPADGIAFFIANTDSSIPHGSGGRLLGLFPDAN.

Mn(2+) is bound by residues E8 and D10. Ca(2+)-binding residues include D10, Y12, N14, and D19. N14 serves as a coordination point for a carbohydrate. The Mn(2+) site is built by D19 and H24. A carbohydrate is bound by residues 99-100, D207, and R227; that span reads VY.

It belongs to the leguminous lectin family. Homotetramer; dimer of dimers. Concanavalin A-like lectins of the Diocleinae subtribe undergo proteolytic processing referred to as circular permutation. The propeptide is split into an N-terminal and a C-terminal part, the gamma and beta chain, respectively. These are then religated in beta-gamma order to form the mature alpha chain. The beta and gamma chains can often be detected in cell extracts. Residues 1-118 of the mature chain, as displayed here, probably constitute the beta chain in the propeptide, residues 119-236 the gamma chain.

Its function is as follows. D-mannose/D-glucose-binding lectin that also binds derivative alpha-methyl-D-mannppyranoside. Has hemagglutinating activity towards rabbit erythrocytes. The sequence is that of Lectin CPL from Bionia pedicellata (Camptosema pedicellatum).